The primary structure comprises 178 residues: Nicotinamide-nucleotide adenylyltransferase (178 aa).

It belongs to the archaeal NMN adenylyltransferase family.

It localises to the cytoplasm. It catalyses the reaction beta-nicotinamide D-ribonucleotide + ATP + H(+) = diphosphate + NAD(+). It participates in cofactor biosynthesis; NAD(+) biosynthesis; NAD(+) from nicotinamide D-ribonucleotide: step 1/1. The polypeptide is Nicotinamide-nucleotide adenylyltransferase (Pyrobaculum neutrophilum (strain DSM 2338 / JCM 9278 / NBRC 100436 / V24Sta) (Thermoproteus neutrophilus)).